The sequence spans 367 residues: Methylated-thiol--coenzyme M methyltransferase (367 aa).

H236, C238, and C313 together coordinate Zn(2+).

Belongs to the uroporphyrinogen decarboxylase family. In terms of assembly, homodimer. Requires Zn(2+) as cofactor.

The catalysed reaction is methanethiol + coenzyme M = methyl-coenzyme M + hydrogen sulfide + H(+). Its function is as follows. Methyltransferase involved in methanogenesis from methylated-thiols. Catalyzes two successive steps: mediates the transfer of a methyl group from the substrate to the cobalt cofactor of a methylated-thiol-specific corrinoid protein (MtsB), and the subsequent transfer of the methyl group from the corrinoid protein to coenzyme M. This Methanosarcina mazei (strain ATCC BAA-159 / DSM 3647 / Goe1 / Go1 / JCM 11833 / OCM 88) (Methanosarcina frisia) protein is Methylated-thiol--coenzyme M methyltransferase (mtsA).